The chain runs to 380 residues: Glutamine synthetase, chloroplastic (380 aa).

Positions 35-125 constitute a GS beta-grasp domain; the sequence is MAAEYIWADG…VMCEVFAPDG (91 aa). Positions 132–380 constitute a GS catalytic domain; it reads TRAKLREIID…RLLIKTVLKG (249 aa).

Belongs to the glutamine synthetase family. In terms of assembly, homooctamer.

Its subcellular location is the plastid. It is found in the chloroplast. It catalyses the reaction L-glutamate + NH4(+) + ATP = L-glutamine + ADP + phosphate + H(+). The sequence is that of Glutamine synthetase, chloroplastic (GLN2) from Chlamydomonas reinhardtii (Chlamydomonas smithii).